A 251-amino-acid polypeptide reads, in one-letter code: MAAHLLIVDALNLIRRIHAVQGSPCVETCQHALDQLIIHSQPTHAVAVFDDDARSSGWRHQRLPDYKAGRPPMPDDLHNEMPALRAAFEQRGIRCWASDGNEADDLAATLALKVTEAGHQATIVSTDKGYCQLLSPGLRIRDYFQKRWLDAPFIEKEFGVLPRQLPDYWGLAGISSSKVPGVAGIGPKSATQLLIQFQNLEGIYAHLDEVPEKWRKKLETHKEMAFLCRDIARLQTDLHIDGNLQQLRLAR.

A Mg(2+)-binding site is contributed by aspartate 104. The 5'-3' exonuclease domain maps to 160-249; sequence VLPRQLPDYW…IDGNLQQLRL (90 aa). Residues leucine 171, alanine 172, proline 180, valine 182, and isoleucine 185 each contribute to the K(+) site. Residues 184 to 189 are interaction with DNA; that stretch reads GIGPKS.

This sequence belongs to the Xni family. Requires Mg(2+) as cofactor. The cofactor is K(+).

Its function is as follows. Has flap endonuclease activity. During DNA replication, flap endonucleases cleave the 5'-overhanging flap structure that is generated by displacement synthesis when DNA polymerase encounters the 5'-end of a downstream Okazaki fragment. This chain is Flap endonuclease Xni, found in Salmonella dublin (strain CT_02021853).